The primary structure comprises 686 residues: Cation channel sperm-associated protein 1 (686 aa).

Residues 1 to 15 show a composition bias toward basic and acidic residues; sequence MDQSSRRDESYHETH. Disordered regions lie at residues 1–57, 97–177, 207–271, and 289–318; these read MDQS…QQPY, TLPN…NRDH, DHHH…KSTA, and QSRE…RAHK. Residues 1-351 are Cytoplasmic-facing; sequence MDQSSRRDES…QMILSLTQSL (351 aa). Residues 25-35 are compositionally biased toward basic residues; it reads SHPHPHPHPTL. Residues 128 to 142 show a composition bias toward basic and acidic residues; the sequence is DPNHHPHQDDPHRPS. Polar residues predominate over residues 147 to 160; sequence HPSSTGSHQGTTHQ. 2 stretches are compositionally biased toward basic residues: residues 211–229 and 235–244; these read EGHH…KEQR and HMHHHIHHRS. Positions 245–271 are enriched in polar residues; the sequence is PSASQLSHKSHSTLATSPSHVGSKSTA. The span at 308–318 shows a compositional bias: basic residues; the sequence is QKRKKAQRAHK. Residues 352-373 traverse the membrane as a helical segment; it reads GFETFIFIVVCLNTVILVAQTF. Residues 374 to 382 are Extracellular-facing; it reads TELEIRGEW. A helical membrane pass occupies residues 383–404; sequence YFMVLDSIFLSIYVLEAVLKLI. Topologically, residues 405–412 are cytoplasmic; that stretch reads ALGLEYFY. Residues 413–435 form a helical membrane-spanning segment; sequence DPWNNLDFFIMVMAVLDFVLLQI. Topologically, residues 436-446 are extracellular; sequence NSLSYSFYNHS. A helical transmembrane segment spans residues 447–469; it reads LFRILKVFKSMRALRAIRVLRRL. Topologically, residues 470–487 are cytoplasmic; sequence SILTSLHEVAGTLSGSLP. The helical transmembrane segment at 488-510 threads the bilayer; that stretch reads SITAILTLMFTCLFLFSVVLRAL. The Extracellular segment spans residues 511 to 521; sequence FQDSDPKRFQN. Residues 522–534 constitute an intramembrane region (helical; Pore-forming); the sequence is IFTTLFTLFTMLT. Residues 535-551 are Extracellular-facing; it reads LDDWSLIYIDNRAQGAW. Residues 552-577 form a helical membrane-spanning segment; sequence YIIPILMIYIVIQYFIFLNLVIAVLV. Topologically, residues 578–686 are cytoplasmic; the sequence is DNFQMALLKG…FEAGDDDYGK (109 aa).

This sequence belongs to the cation channel sperm-associated (TC 1.A.1.19) family. In terms of assembly, component of the CatSper complex or CatSpermasome composed of the core pore-forming members CATSPER1, CATSPER2, CATSPER3 and CATSPER4 as well as auxiliary members CATSPERB, CATSPERG2, CATSPERD, CATSPERE, CATSPERZ, C2CD6/CATSPERT, SLCO6C1, TMEM249, TMEM262 and EFCAB9. HSPA1 may be an additional auxiliary complex member. The core complex members CATSPER1, CATSPER2, CATSPER3 and CATSPER4 form a heterotetrameric channel. The auxiliary CATSPERB, CATSPERG2, CATSPERD and CATSPERE subunits form a pavilion-like structure over the pore which stabilizes the complex through interactions with CATSPER4, CATSPER3, CATSPER1 and CATSPER2 respectively. SLCO6C1 interacts with CATSPERE, and TMEM262/CATSPERH interacts with CATSPERB, further stabilizing the complex. C2CD6/CATSPERT interacts at least with CATSPERD and is required for targeting the CatSper complex in the flagellar membrane. Interacts with Ca(v)3.3/CACNA1I, leading to suppression of T-type calcium channel activity. Testis-specific.

It localises to the cell projection. Its subcellular location is the cilium. The protein localises to the flagellum membrane. The catalysed reaction is Ca(2+)(in) = Ca(2+)(out). With respect to regulation, activated by intracellular alkalinization. In contrast to the human ortholog, not activated by progesterone. In terms of biological role, pore-forming subunit of the CatSper complex, a sperm-specific voltage-gated calcium channel that plays a central role in sperm cell hyperactivation. Controls calcium entry to mediate the hyperactivated motility, a step needed for sperm motility which is essential late in the preparation of sperm for fertilization. The sequence is that of Cation channel sperm-associated protein 1 (Catsper1) from Mus musculus (Mouse).